A 279-amino-acid polypeptide reads, in one-letter code: NAD kinase (279 aa).

Asp-57 acts as the Proton acceptor in catalysis. Residues 57–58 (DG), 133–134 (NE), Arg-159, Asp-161, and 172–177 (TAYNKS) each bind NAD(+).

The protein belongs to the NAD kinase family. Requires a divalent metal cation as cofactor.

It localises to the cytoplasm. It catalyses the reaction NAD(+) + ATP = ADP + NADP(+) + H(+). Involved in the regulation of the intracellular balance of NAD and NADP, and is a key enzyme in the biosynthesis of NADP. Catalyzes specifically the phosphorylation on 2'-hydroxyl of the adenosine moiety of NAD to yield NADP. In Streptococcus pyogenes serotype M12 (strain MGAS2096), this protein is NAD kinase.